The sequence spans 156 residues: MKELTHVDEKGVKMVEVGHKREVLRKAVAKGRIRLRPETIELIKAGKTKKGNVIATAQIAGILAVKKTPELIPLCHPIPLTGVDISFEFGEDYIEATCEVRATYKTGVEMEALMGVTLALLTIWDMVKAVEKDEQGQYPFTRIEGIHVVEKVKEEG.

Residues 74 to 76 (LCH) and 110 to 111 (ME) contribute to the substrate site. Residue aspartate 125 is part of the active site.

This sequence belongs to the MoaC family. As to quaternary structure, homohexamer; trimer of dimers.

The enzyme catalyses (8S)-3',8-cyclo-7,8-dihydroguanosine 5'-triphosphate = cyclic pyranopterin phosphate + diphosphate. Its pathway is cofactor biosynthesis; molybdopterin biosynthesis. Functionally, catalyzes the conversion of (8S)-3',8-cyclo-7,8-dihydroguanosine 5'-triphosphate to cyclic pyranopterin monophosphate (cPMP). The chain is Probable cyclic pyranopterin monophosphate synthase from Thermococcus onnurineus (strain NA1).